A 214-amino-acid polypeptide reads, in one-letter code: MDISIADLRLDYNLEELLESETSADPFIVFKQWLERAVSSGRLEPNAMTLATISPEGKPRARMVLLKDFDPRGFVLFTNYHSAKGQELIANPNAALVFWWGELQRQIRIEGTVEKISEEESDNYFFVRPWESRLGAWASNQSEVISGRDILEKRLTELKEEYAGREVPRPPHWGGFRLIPSLIEFWQGRPSRLHDRLCYYRQEDGSWQRQRLAP.

Residues 9 to 12 (RLDY) and K67 contribute to the substrate site. FMN is bound by residues 62-67 (RMVLLK), 77-78 (FT), K84, and Q106. Substrate-binding residues include Y124, R128, and S132. Residues 141 to 142 (QS) and W186 contribute to the FMN site. Residue 192–194 (RLH) participates in substrate binding. FMN is bound at residue R196.

Belongs to the pyridoxamine 5'-phosphate oxidase family. As to quaternary structure, homodimer. FMN serves as cofactor.

The enzyme catalyses pyridoxamine 5'-phosphate + O2 + H2O = pyridoxal 5'-phosphate + H2O2 + NH4(+). The catalysed reaction is pyridoxine 5'-phosphate + O2 = pyridoxal 5'-phosphate + H2O2. It participates in cofactor metabolism; pyridoxal 5'-phosphate salvage; pyridoxal 5'-phosphate from pyridoxamine 5'-phosphate: step 1/1. It functions in the pathway cofactor metabolism; pyridoxal 5'-phosphate salvage; pyridoxal 5'-phosphate from pyridoxine 5'-phosphate: step 1/1. Functionally, catalyzes the oxidation of either pyridoxine 5'-phosphate (PNP) or pyridoxamine 5'-phosphate (PMP) into pyridoxal 5'-phosphate (PLP). The polypeptide is Pyridoxine/pyridoxamine 5'-phosphate oxidase (Microcystis aeruginosa (strain NIES-843 / IAM M-2473)).